A 397-amino-acid polypeptide reads, in one-letter code: S-adenosylmethionine synthase (397 aa).

ATP is bound at residue His17. Asp19 serves as a coordination point for Mg(2+). A K(+)-binding site is contributed by Glu45. L-methionine is bound by residues Glu58 and Gln101. A flexible loop region spans residues Gln101–Lys111. Residues Asp176 to Lys178, Arg243 to Phe244, Asp252, Arg258 to Lys259, and Lys279 contribute to the ATP site. Asp252 provides a ligand contact to L-methionine. Lys283 provides a ligand contact to L-methionine.

This sequence belongs to the AdoMet synthase family. As to quaternary structure, homotetramer; dimer of dimers. The cofactor is Mg(2+). K(+) serves as cofactor.

The protein resides in the cytoplasm. The enzyme catalyses L-methionine + ATP + H2O = S-adenosyl-L-methionine + phosphate + diphosphate. It functions in the pathway amino-acid biosynthesis; S-adenosyl-L-methionine biosynthesis; S-adenosyl-L-methionine from L-methionine: step 1/1. Functionally, catalyzes the formation of S-adenosylmethionine (AdoMet) from methionine and ATP. The overall synthetic reaction is composed of two sequential steps, AdoMet formation and the subsequent tripolyphosphate hydrolysis which occurs prior to release of AdoMet from the enzyme. The polypeptide is S-adenosylmethionine synthase (Staphylococcus aureus (strain USA300)).